A 95-amino-acid chain; its full sequence is CRISPR-associated endoribonuclease Cas2 (95 aa).

Asp-9 serves as a coordination point for Mg(2+).

The protein belongs to the CRISPR-associated endoribonuclease Cas2 protein family. As to quaternary structure, homodimer, forms a heterotetramer with a Cas1 homodimer. It depends on Mg(2+) as a cofactor.

In terms of biological role, CRISPR (clustered regularly interspaced short palindromic repeat), is an adaptive immune system that provides protection against mobile genetic elements (viruses, transposable elements and conjugative plasmids). CRISPR clusters contain sequences complementary to antecedent mobile elements and target invading nucleic acids. CRISPR clusters are transcribed and processed into CRISPR RNA (crRNA). Functions as a ssRNA-specific endoribonuclease. Involved in the integration of spacer DNA into the CRISPR cassette. This Methylorubrum extorquens (strain CM4 / NCIMB 13688) (Methylobacterium extorquens) protein is CRISPR-associated endoribonuclease Cas2.